The following is a 196-amino-acid chain: S-norcoclaurine synthase 2 (196 aa).

A signal peptide spans 1-19 (MRMEVVLVVFLMFIGTINC). 104-106 (YRE) provides a ligand contact to dopamine. The Proton donor role is filled by lysine 118. Aspartate 137 lines the (4-hydroxyphenyl)acetaldehyde pocket.

It belongs to the BetVI family.

The catalysed reaction is (4-hydroxyphenyl)acetaldehyde + dopamine = (S)-norcoclaurine + H2O. Not inhibited by O-phenanthroline or EDTA. Functionally, involved in the biosynthesis of the common precursor of all benzylisoquinoline alkaloids such as morphine, sanguinarine, codeine or berberine. Condenses dopamine and pyruvic acid or 4-hydroxyphenylpyruvate. The polypeptide is S-norcoclaurine synthase 2 (PR10A) (Coptis japonica (Japanese goldthread)).